Reading from the N-terminus, the 74-residue chain is MQMKYLIPIFFLVLIVADHCHAFIGMIPGLIGGLISAFKGRRKRDITAQIEQYRNIQKREAAELEELLANLPVY.

The N-terminal stretch at 1 to 22 is a signal peptide; the sequence is MQMKYLIPIFFLVLIVADHCHA. At Lys-39 the chain carries Lysine amide. Positions 40-74 are excised as a propeptide; that stretch reads GRRKRDITAQIEQYRNIQKREAAELEELLANLPVY.

The protein belongs to the non-disulfide-bridged peptide (NDBP) superfamily. Short antimicrobial peptide (group 4) family. Expressed by the venom gland.

It is found in the secreted. Antimicrobial peptide. Is able to kill Mycobacterium abscessus subsp. massiliense in a dose-dependent manner. Has antifungal activity against Candida spp. and one Cryptococcus neoformans strains with MICs values ranging from 12.5 to 200 uM. Also shows an inhibitory activity on C.albicans biofilms at high concentrations. Shows low cytotoxic activity and has weak hemolytic activity on human erythrocytes. Shows anti-inflammatory activities, since it decreases release of pro-inflammatory cytokines, and increases release of anti-inflammatory cytokines. Acts by blocking the Toll-like receptor 4 (TLR4). In addition, decreases the expression of costimulatory molecules such as CD80 and CD86 in LPS-stimulated cells. In vivo, does not induce immune cell migration. Helical wheel projections predict an amphipathic peptide with distinct hydrophobic and hydrophilic faces. The chain is Antimicrobial peptide ToAp1 from Tityus obscurus (Amazonian scorpion).